Reading from the N-terminus, the 122-residue chain is MQTAHIGTDIIEISRIRKAIKAHSQRILNKIFTKREQEYCLSLTNPYPSFAARFAAKEAVAKALGTGIGKVVRWKDIEILKSSKHPEVYLPERVYKELGISKVLLSISHSREYATAVAVTLI.

Residues D9 and E58 each contribute to the Mg(2+) site.

It belongs to the P-Pant transferase superfamily. AcpS family. The cofactor is Mg(2+).

It is found in the cytoplasm. It catalyses the reaction apo-[ACP] + CoA = holo-[ACP] + adenosine 3',5'-bisphosphate + H(+). Transfers the 4'-phosphopantetheine moiety from coenzyme A to a Ser of acyl-carrier-protein. The sequence is that of Holo-[acyl-carrier-protein] synthase from Chlamydia caviae (strain ATCC VR-813 / DSM 19441 / 03DC25 / GPIC) (Chlamydophila caviae).